The chain runs to 61 residues: Copper metallothionein 1-1 (61 aa).

Positions 1 to 8 are excised as a propeptide; sequence MFSELINF. Residues C15, C17, C19, C22, and C28 each coordinate Cu cation. Residue K30 forms a Glycyl lysine isopeptide (Lys-Gly) (interchain with G-Cter in ubiquitin) linkage. C32, C34, C38, C44, and C46 together coordinate Cu cation. Residues 37–61 form a disordered region; it reads GCNSDDKCPCGNKSEETKKSCCSGK. A compositionally biased stretch (basic and acidic residues) spans 40–55; the sequence is SDDKCPCGNKSEETKK.

It belongs to the metallothionein superfamily. Type 12 family.

Protects the cell against copper toxicity by tightly chelating copper ions. May also act as a depository for copper designated for the effective transfer into the apo forms of copper proteins. The sequence is that of Copper metallothionein 1-1 (CUP1-1) from Saccharomyces cerevisiae (strain ATCC 204508 / S288c) (Baker's yeast).